We begin with the raw amino-acid sequence, 424 residues long: Glutamyl-tRNA reductase (424 aa).

Substrate-binding positions include 49-52, Ser-109, 114-116, and Gln-120; these read TCNR and EDQ. Cys-50 functions as the Nucleophile in the catalytic mechanism. Residue 189–194 participates in NADP(+) binding; sequence GFGKMS.

It belongs to the glutamyl-tRNA reductase family. Homodimer.

It catalyses the reaction (S)-4-amino-5-oxopentanoate + tRNA(Glu) + NADP(+) = L-glutamyl-tRNA(Glu) + NADPH + H(+). It functions in the pathway porphyrin-containing compound metabolism; protoporphyrin-IX biosynthesis; 5-aminolevulinate from L-glutamyl-tRNA(Glu): step 1/2. In terms of biological role, catalyzes the NADPH-dependent reduction of glutamyl-tRNA(Glu) to glutamate 1-semialdehyde (GSA). This Alkaliphilus metalliredigens (strain QYMF) protein is Glutamyl-tRNA reductase.